We begin with the raw amino-acid sequence, 192 residues long: Crossover junction endodeoxyribonuclease RuvC (192 aa).

Active-site residues include D20, E80, and D153. Mg(2+) is bound by residues D20, E80, and D153.

This sequence belongs to the RuvC family. In terms of assembly, homodimer which binds Holliday junction (HJ) DNA. The HJ becomes 2-fold symmetrical on binding to RuvC with unstacked arms; it has a different conformation from HJ DNA in complex with RuvA. In the full resolvosome a probable DNA-RuvA(4)-RuvB(12)-RuvC(2) complex forms which resolves the HJ. Mg(2+) is required as a cofactor.

It localises to the cytoplasm. It carries out the reaction Endonucleolytic cleavage at a junction such as a reciprocal single-stranded crossover between two homologous DNA duplexes (Holliday junction).. Functionally, the RuvA-RuvB-RuvC complex processes Holliday junction (HJ) DNA during genetic recombination and DNA repair. Endonuclease that resolves HJ intermediates. Cleaves cruciform DNA by making single-stranded nicks across the HJ at symmetrical positions within the homologous arms, yielding a 5'-phosphate and a 3'-hydroxyl group; requires a central core of homology in the junction. The consensus cleavage sequence is 5'-(A/T)TT(C/G)-3'. Cleavage occurs on the 3'-side of the TT dinucleotide at the point of strand exchange. HJ branch migration catalyzed by RuvA-RuvB allows RuvC to scan DNA until it finds its consensus sequence, where it cleaves and resolves the cruciform DNA. In Christiangramia forsetii (strain DSM 17595 / CGMCC 1.15422 / KT0803) (Gramella forsetii), this protein is Crossover junction endodeoxyribonuclease RuvC.